A 294-amino-acid chain; its full sequence is MDSPFKTIALIGKPHHEGANQTLTGLHQYLTTRGFKVLVESRVAHTLGIMDENVMDLVQLGEQADLAIVVGGDGNMLGAARVLSRFDVAVIGVNRGNLGFLTDLSPQDYLLPLEQVLSGHYKSEHRFLLEAAVYRHGERKSSNLAVNEAVLHPGKIAHMIEFEVYIDGSFMYSQRSDGIIVATPTGSTAYSLSAGGAILTPKLNAITLVPMFPHTLSSRPIVLDADSEVRLLVSPDNQDDAMQVSCDGQVTLAVHPGDEILIKKSKHKLHLVHPLDYSYFHVLRNKLGWGSKLF.

The active-site Proton acceptor is D73. Residues 73 to 74 (DG), 147 to 148 (NE), H158, R175, D177, 188 to 193 (TAYSLS), and Q249 contribute to the NAD(+) site.

The protein belongs to the NAD kinase family. Requires a divalent metal cation as cofactor.

It is found in the cytoplasm. It catalyses the reaction NAD(+) + ATP = ADP + NADP(+) + H(+). In terms of biological role, involved in the regulation of the intracellular balance of NAD and NADP, and is a key enzyme in the biosynthesis of NADP. Catalyzes specifically the phosphorylation on 2'-hydroxyl of the adenosine moiety of NAD to yield NADP. This chain is NAD kinase, found in Aeromonas salmonicida (strain A449).